A 569-amino-acid chain; its full sequence is Adenine deaminase 1 (569 aa).

It belongs to the metallo-dependent hydrolases superfamily. Adenine deaminase family. Requires Mn(2+) as cofactor.

The catalysed reaction is adenine + H2O + H(+) = hypoxanthine + NH4(+). The protein is Adenine deaminase 1 of Rhizobium johnstonii (strain DSM 114642 / LMG 32736 / 3841) (Rhizobium leguminosarum bv. viciae).